A 209-amino-acid polypeptide reads, in one-letter code: Glutathione S-transferase (209 aa).

The region spanning Phe7 to Gly91 is the GST N-terminal domain. Glutathione is bound by residues Gln62–Val63, Gln75–Ser76, Asp109, Lys121, and Thr125. The region spanning Gly93 to Tyr209 is the GST C-terminal domain.

This sequence belongs to the GST superfamily. As to quaternary structure, homodimer. In the absence of ligands two homodimers may interact to form a tetramer.

It carries out the reaction RX + glutathione = an S-substituted glutathione + a halide anion + H(+). Conjugation of reduced glutathione to a wide number of exogenous and endogenous hydrophobic electrophiles. May also function as a storage protein or ligandin for parasitotoxic ferriprotoporphyrin IX (hemin). This chain is Glutathione S-transferase, found in Plasmodium yoelii yoelii.